Reading from the N-terminus, the 133-residue chain is Small ribosomal subunit protein uS9 (133 aa).

The disordered stretch occupies residues 114 to 133 (VERKKYGKKKARRSPQFSKR). The span at 118–133 (KYGKKKARRSPQFSKR) shows a compositional bias: basic residues.

It belongs to the universal ribosomal protein uS9 family.

The polypeptide is Small ribosomal subunit protein uS9 (Fusobacterium nucleatum subsp. nucleatum (strain ATCC 25586 / DSM 15643 / BCRC 10681 / CIP 101130 / JCM 8532 / KCTC 2640 / LMG 13131 / VPI 4355)).